The following is a 300-amino-acid chain: Aspartate carbamoyltransferase catalytic subunit (300 aa).

Residues Arg-54 and Thr-55 each coordinate carbamoyl phosphate. An L-aspartate-binding site is contributed by Lys-82. The carbamoyl phosphate site is built by Arg-104, His-131, and Gln-134. Arg-164 and Arg-213 together coordinate L-aspartate. Positions 256 and 257 each coordinate carbamoyl phosphate.

Belongs to the aspartate/ornithine carbamoyltransferase superfamily. ATCase family. As to quaternary structure, heterododecamer (2C3:3R2) of six catalytic PyrB chains organized as two trimers (C3), and six regulatory PyrI chains organized as three dimers (R2).

It carries out the reaction carbamoyl phosphate + L-aspartate = N-carbamoyl-L-aspartate + phosphate + H(+). It functions in the pathway pyrimidine metabolism; UMP biosynthesis via de novo pathway; (S)-dihydroorotate from bicarbonate: step 2/3. Catalyzes the condensation of carbamoyl phosphate and aspartate to form carbamoyl aspartate and inorganic phosphate, the committed step in the de novo pyrimidine nucleotide biosynthesis pathway. The chain is Aspartate carbamoyltransferase catalytic subunit from Malacoplasma penetrans (strain HF-2) (Mycoplasma penetrans).